The sequence spans 477 residues: Bifunctional protein HldE (477 aa).

The interval 1-319 (MTVIFPNFSK…NIMNSHICTT (319 aa)) is ribokinase. 195–198 (NISE) contacts ATP. D264 is an active-site residue. Residues 346-477 (MTNGVFDILH…NIINAIKRKN (132 aa)) are cytidylyltransferase.

It in the N-terminal section; belongs to the carbohydrate kinase PfkB family. In the C-terminal section; belongs to the cytidylyltransferase family. As to quaternary structure, homodimer.

The catalysed reaction is D-glycero-beta-D-manno-heptose 7-phosphate + ATP = D-glycero-beta-D-manno-heptose 1,7-bisphosphate + ADP + H(+). It catalyses the reaction D-glycero-beta-D-manno-heptose 1-phosphate + ATP + H(+) = ADP-D-glycero-beta-D-manno-heptose + diphosphate. It functions in the pathway nucleotide-sugar biosynthesis; ADP-L-glycero-beta-D-manno-heptose biosynthesis; ADP-L-glycero-beta-D-manno-heptose from D-glycero-beta-D-manno-heptose 7-phosphate: step 1/4. It participates in nucleotide-sugar biosynthesis; ADP-L-glycero-beta-D-manno-heptose biosynthesis; ADP-L-glycero-beta-D-manno-heptose from D-glycero-beta-D-manno-heptose 7-phosphate: step 3/4. Its function is as follows. Catalyzes the phosphorylation of D-glycero-D-manno-heptose 7-phosphate at the C-1 position to selectively form D-glycero-beta-D-manno-heptose-1,7-bisphosphate. Catalyzes the ADP transfer from ATP to D-glycero-beta-D-manno-heptose 1-phosphate, yielding ADP-D-glycero-beta-D-manno-heptose. This is Bifunctional protein HldE from Blochmanniella pennsylvanica (strain BPEN).